We begin with the raw amino-acid sequence, 510 residues long: ATP synthase subunit alpha (510 aa).

Position 170-177 (Gly-170–Thr-177) interacts with ATP.

It belongs to the ATPase alpha/beta chains family. F-type ATPases have 2 components, CF(1) - the catalytic core - and CF(0) - the membrane proton channel. CF(1) has five subunits: alpha(3), beta(3), gamma(1), delta(1), epsilon(1). CF(0) has three main subunits: a(1), b(2) and c(9-12). The alpha and beta chains form an alternating ring which encloses part of the gamma chain. CF(1) is attached to CF(0) by a central stalk formed by the gamma and epsilon chains, while a peripheral stalk is formed by the delta and b chains.

Its subcellular location is the cell inner membrane. It carries out the reaction ATP + H2O + 4 H(+)(in) = ADP + phosphate + 5 H(+)(out). Its function is as follows. Produces ATP from ADP in the presence of a proton gradient across the membrane. The alpha chain is a regulatory subunit. This Dictyoglomus thermophilum (strain ATCC 35947 / DSM 3960 / H-6-12) protein is ATP synthase subunit alpha.